The sequence spans 314 residues: tRNA dimethylallyltransferase (314 aa).

Residue 12 to 19 (GPTASGKT) participates in ATP binding. 14–19 (TASGKT) contacts substrate. Interaction with substrate tRNA regions lie at residues 37–40 (DSAL) and 162–166 (QRIIR).

The protein belongs to the IPP transferase family. Monomer. Mg(2+) is required as a cofactor.

The catalysed reaction is adenosine(37) in tRNA + dimethylallyl diphosphate = N(6)-dimethylallyladenosine(37) in tRNA + diphosphate. Functionally, catalyzes the transfer of a dimethylallyl group onto the adenine at position 37 in tRNAs that read codons beginning with uridine, leading to the formation of N6-(dimethylallyl)adenosine (i(6)A). The polypeptide is tRNA dimethylallyltransferase (Acinetobacter baumannii (strain SDF)).